Reading from the N-terminus, the 139-residue chain is uncharacterized protein (139 aa).

A helical transmembrane segment spans residues 22 to 38; sequence SVMSVCFMTMSATVLPI.

Its subcellular location is the membrane. This is an uncharacterized protein from Saccharomyces cerevisiae (strain ATCC 204508 / S288c) (Baker's yeast).